The chain runs to 392 residues: DNA-directed RNA polymerase subunit Rpo1C (392 aa).

This sequence belongs to the RNA polymerase beta' chain family. In terms of assembly, part of the RNA polymerase complex.

The protein localises to the cytoplasm. The enzyme catalyses RNA(n) + a ribonucleoside 5'-triphosphate = RNA(n+1) + diphosphate. Its function is as follows. DNA-dependent RNA polymerase (RNAP) catalyzes the transcription of DNA into RNA using the four ribonucleoside triphosphates as substrates. Forms part of the jaw domain. The protein is DNA-directed RNA polymerase subunit Rpo1C of Metallosphaera sedula (strain ATCC 51363 / DSM 5348 / JCM 9185 / NBRC 15509 / TH2).